The sequence spans 156 residues: 6,7-dimethyl-8-ribityllumazine synthase (156 aa).

Residues Phe-22, 56–58 (ALE), and 80–82 (AVI) each bind 5-amino-6-(D-ribitylamino)uracil. A (2S)-2-hydroxy-3-oxobutyl phosphate-binding site is contributed by 85–86 (DT). Residue His-88 is the Proton donor of the active site. A 5-amino-6-(D-ribitylamino)uracil-binding site is contributed by Phe-113. Arg-127 is a (2S)-2-hydroxy-3-oxobutyl phosphate binding site.

The protein belongs to the DMRL synthase family.

It carries out the reaction (2S)-2-hydroxy-3-oxobutyl phosphate + 5-amino-6-(D-ribitylamino)uracil = 6,7-dimethyl-8-(1-D-ribityl)lumazine + phosphate + 2 H2O + H(+). It functions in the pathway cofactor biosynthesis; riboflavin biosynthesis; riboflavin from 2-hydroxy-3-oxobutyl phosphate and 5-amino-6-(D-ribitylamino)uracil: step 1/2. In terms of biological role, catalyzes the formation of 6,7-dimethyl-8-ribityllumazine by condensation of 5-amino-6-(D-ribitylamino)uracil with 3,4-dihydroxy-2-butanone 4-phosphate. This is the penultimate step in the biosynthesis of riboflavin. In Leuconostoc mesenteroides subsp. mesenteroides (strain ATCC 8293 / DSM 20343 / BCRC 11652 / CCM 1803 / JCM 6124 / NCDO 523 / NBRC 100496 / NCIMB 8023 / NCTC 12954 / NRRL B-1118 / 37Y), this protein is 6,7-dimethyl-8-ribityllumazine synthase.